The chain runs to 732 residues: MDTSGHFHDSGVGDLDEDPKCPCPSSGDEQQQQQQPPPPSAPPAVPQQPPGPLLQPQPPQLQQQQQQQQQQQQQQQQQQQAPLHPLPQLAQLQSQLVHPGLLHSSPTAFRAPNSANSTAILHPSSRQGSQLNLNDHLLGHSPSSTATSGPGGGSRHRQASPLVHRRDSNPFTEIAMSSCKYSGGVMKPLSRLSASRRNLIEAEPEGQPLQLFSPSNPPEIIISSREDNHAHQTLLHHPNATHNHQHAGTTAGSTTFPKANKRKNQNIGYKLGHRRALFEKRKRLSDYALIFGMFGIVVMVIETELSWGLYSKDSMFSLALKCLISLSTIILLGLIIAYHTREVQLFVIDNGADDWRIAMTYERILYISLEMLVCAIHPIPGEYKFFWTARLAFSYTPSRAEADVDIILSIPMFLRLYLIARVMLLHSKLFTDASSRSIGALNKINFNTRFVMKTLMTICPGTVLLVFSISLWIIAAWTVRVCERYHDQQDVTSNFLGAMWLISITFLSIGYGDMVPHTYCGKGVCLLTGIMGAGCTALVVAVVARKLELTKAEKHVHNFMMDTQLTKRIKNAAANVLRETWLIYKHTKLLKKIDHAKVRKHQRKFLQAIHQLRGVKMEQRKLSDQANTLVDLSKMQNVMYDLITELNDRSEDLEKQIGSLESKLEHLTASFNSLPLLIADTLRQQQQQLLTAFVEARGISVAVGTSHAPPSDSPIGISSTSFPTPYTSSSSC.

The span at 1-11 shows a compositional bias: basic and acidic residues; the sequence is MDTSGHFHDSG. Disordered regions lie at residues 1–82 and 103–162; these read MDTS…QQAP and HSSP…ASPL. Pro residues predominate over residues 35-59; sequence QPPPPSAPPAVPQQPPGPLLQPQPP. Over residues 60-82 the composition is skewed to low complexity; it reads QLQQQQQQQQQQQQQQQQQQQAP. Over residues 113–133 the composition is skewed to polar residues; it reads NSANSTAILHPSSRQGSQLNL. Over residues 139 to 148 the composition is skewed to low complexity; that stretch reads GHSPSSTATS. Ser168 bears the Phosphoserine mark. The segment covering 241–257 has biased composition (polar residues); that stretch reads THNHQHAGTTAGSTTFP. The segment at 241–260 is disordered; that stretch reads THNHQHAGTTAGSTTFPKAN. A helical membrane pass occupies residues 289 to 309; the sequence is LIFGMFGIVVMVIETELSWGL. The chain crosses the membrane as a helical span at residues 316–336; sequence FSLALKCLISLSTIILLGLII. A helical transmembrane segment spans residues 367–387; it reads ISLEMLVCAIHPIPGEYKFFW. The chain crosses the membrane as a helical span at residues 406-426; that stretch reads IILSIPMFLRLYLIARVMLLH. Residues 455–475 form a helical membrane-spanning segment; that stretch reads LMTICPGTVLLVFSISLWIIA. Positions 495 to 515 form an intramembrane region, pore-forming; it reads FLGAMWLISITFLSIGYGDMV. The chain crosses the membrane as a helical span at residues 524–544; sequence VCLLTGIMGAGCTALVVAVVA. The segment at 562-638 is calmodulin-binding; the sequence is DTQLTKRIKN…LVDLSKMQNV (77 aa). Positions 643–670 form a coiled coil; that stretch reads ITELNDRSEDLEKQIGSLESKLEHLTAS. Residues 704 to 732 form a disordered region; the sequence is GTSHAPPSDSPIGISSTSFPTPYTSSSSC. Positions 718 to 732 are enriched in low complexity; it reads SSTSFPTPYTSSSSC.

Belongs to the potassium channel KCNN family. KCa2.3/KCNN3 subfamily. In terms of assembly, homodimer. Heteromultimer with KCNN2 or KCNN1; this modulates plasma membrane expression and consequently the small conductance calcium-activated potassium channel activity. The complex is composed of 4 channel subunits each of which binds to a calmodulin subunit which regulates the channel activity through calcium-binding. Interacts with CALM1.

It localises to the cell membrane. Its subcellular location is the cytoplasm. The protein localises to the myofibril. The protein resides in the sarcomere. It is found in the z line. It carries out the reaction K(+)(in) = K(+)(out). With respect to regulation, inhibited by bee venom neurotoxin apamin. Its function is as follows. Small conductance calcium-activated potassium channel that mediates the voltage-independent transmembrane transfer of potassium across the cell membrane through a constitutive interaction with calmodulin which binds the intracellular calcium allowing its opening. The current is characterized by a voltage-independent activation, an intracellular calcium concentration increase-dependent activation and a single-channel conductance of 10 picosiemens. Also presents an inwardly rectifying current, thus reducing its already small outward conductance of potassium ions, which is particularly the case when the membrane potential displays positive values, above + 20 mV. Activation is followed by membrane hyperpolarization. Thought to regulate neuronal excitability by contributing to the slow component of synaptic afterhyperpolarization. The polypeptide is Small conductance calcium-activated potassium channel protein 3 (Rattus norvegicus (Rat)).